A 334-amino-acid polypeptide reads, in one-letter code: Aspartate carbamoyltransferase catalytic subunit (334 aa).

The carbamoyl phosphate site is built by Arg71 and Thr72. Residue Lys99 participates in L-aspartate binding. Carbamoyl phosphate contacts are provided by Arg121, His151, and Gln154. Residues Arg184 and Arg239 each coordinate L-aspartate. Carbamoyl phosphate contacts are provided by Gly280 and Pro281.

It belongs to the aspartate/ornithine carbamoyltransferase superfamily. ATCase family. As to quaternary structure, heterododecamer (2C3:3R2) of six catalytic PyrB chains organized as two trimers (C3), and six regulatory PyrI chains organized as three dimers (R2).

It carries out the reaction carbamoyl phosphate + L-aspartate = N-carbamoyl-L-aspartate + phosphate + H(+). The protein operates within pyrimidine metabolism; UMP biosynthesis via de novo pathway; (S)-dihydroorotate from bicarbonate: step 2/3. Functionally, catalyzes the condensation of carbamoyl phosphate and aspartate to form carbamoyl aspartate and inorganic phosphate, the committed step in the de novo pyrimidine nucleotide biosynthesis pathway. This Pseudomonas putida (strain ATCC 47054 / DSM 6125 / CFBP 8728 / NCIMB 11950 / KT2440) protein is Aspartate carbamoyltransferase catalytic subunit.